The chain runs to 196 residues: Imidazole glycerol phosphate synthase subunit HisH (196 aa).

The region spanning 2–196 (NVVILDTGCA…AQLLKNFLEM (195 aa)) is the Glutamine amidotransferase type-1 domain. Cysteine 77 serves as the catalytic Nucleophile. Residues histidine 178 and glutamate 180 contribute to the active site.

In terms of assembly, heterodimer of HisH and HisF.

The protein resides in the cytoplasm. It carries out the reaction 5-[(5-phospho-1-deoxy-D-ribulos-1-ylimino)methylamino]-1-(5-phospho-beta-D-ribosyl)imidazole-4-carboxamide + L-glutamine = D-erythro-1-(imidazol-4-yl)glycerol 3-phosphate + 5-amino-1-(5-phospho-beta-D-ribosyl)imidazole-4-carboxamide + L-glutamate + H(+). The enzyme catalyses L-glutamine + H2O = L-glutamate + NH4(+). It functions in the pathway amino-acid biosynthesis; L-histidine biosynthesis; L-histidine from 5-phospho-alpha-D-ribose 1-diphosphate: step 5/9. Functionally, IGPS catalyzes the conversion of PRFAR and glutamine to IGP, AICAR and glutamate. The HisH subunit catalyzes the hydrolysis of glutamine to glutamate and ammonia as part of the synthesis of IGP and AICAR. The resulting ammonia molecule is channeled to the active site of HisF. This is Imidazole glycerol phosphate synthase subunit HisH from Salmonella choleraesuis (strain SC-B67).